The primary structure comprises 723 residues: MAEAEGESLESWLNKATNPSNRQEDWEYIIGFCDQINKELEGPQIAVRLLAHKIQSPQEWEALQALTVLEACMKNCGRRFHNEVGKFRFLNELIKVVSPKYLGDRVSEKVKTKVIELLYSWTMALPEEAKIKDAYHMLKRQGIVQSDPPIPVDRTLIPSPPPRPKNPVFDDEEKSKLLAKLLKSKNPDDLQEANKLIKSMVKEDEARIQKVTKRLHTLEEVNNNVRLLSEMLLHYSQEDSSDGDRELMKELFDQCENKRRTLFKLASETEDNDNSLGDILQASDNLSRVINSYKTIIEGQVINGEVATLTLPDSEGNSQCSNQGTLIDLAELDTTNSLSSVLAPAPTPPSSGIPILPPPPQASGPPRSRSSSQAEATLGPSSTSNALSWLDEELLCLGLADPAPNVPPKESAGNSQWHLLQREQSDLDFFSPRPGTAACGASDAPLLQPSAPSSSSSQAPLPPPFPAPVVPASVPAPSAGSSLFSTGVAPALAPKVEPAVPGHHGLALGNSALHHLDALDQLLEEAKVTSGLVKPTTSPLIPTTTPARPLLPFSTGPGSPLFQPLSFQSQGSPPKGPELSLASIHVPLESIKPSSALPVTAYDKNGFRILFHFAKECPPGRPDVLVVVVSMLNTAPLPVKSIVLQAAVPKSMKVKLQPPSGTELSPFSPIQPPAAITQVMLLANPLKEKVRLRYKLTFALGEQLSTEVGEVDQFPPVEQWGNL.

The tract at residues M1 to D313 is binds to ARF1 (in long isoform). One can recognise a VHS domain in the interval A16–S146. Phosphoserine is present on residues S159 and S275. One can recognise a GAT domain in the interval D171–E298. The segment at G299–P593 is unstructured hinge. The disordered stretch occupies residues S339 to S384. Over residues A345 to S363 the composition is skewed to pro residues. The span at G364–A374 shows a compositional bias: low complexity. The DXXLL motif lies at D391–L395. The interval D428 to P464 is disordered. Low complexity predominate over residues A441–A459. Residues S594–P715 enclose the GAE domain.

It belongs to the GGA protein family. Monomer. Interacts with GGA1 and GGA2. Binds to clathrin and activated ARFs, such as ARF1, ARF5 and ARF6. Binds RABEP1 and RABGEF1. Interacts with the membrane proteins M6PR/CD-MPR and IGF2R/CI-MPR and the accessory proteins SYNRG, EPN4, NECAP1, NECAP2 and AFTPH/aftiphilin. Interacts with TSG101 and UBC. Interacts with ADRA2B. Interacts with NTRK1; the interaction is independent of NTRK1 activation and ubiquitination. Interacts (via VHS domain) with BACE1 (via DXXLL motif). In terms of processing, phosphorylated by CK2 and dephosphorylated by PP2A. Phosphorylation of GGA3 allows the internal DXXLL motif to bind the VHS domain and to inhibit the recognition of cargo signals. Ubiquitinated. Post-translationally, proteolytically cleaved during apoptosis by CASP3. In terms of tissue distribution, ubiquitously expressed.

The protein localises to the golgi apparatus. Its subcellular location is the trans-Golgi network membrane. It localises to the endosome membrane. It is found in the early endosome membrane. The protein resides in the recycling endosome membrane. In terms of biological role, plays a role in protein sorting and trafficking between the trans-Golgi network (TGN) and endosomes. Mediates the ARF-dependent recruitment of clathrin to the TGN and binds ubiquitinated proteins and membrane cargo molecules with a cytosolic acidic cluster-dileucine (DXXLL) motif. Mediates export of the GPCR receptor ADRA2B to the cell surface. nvolved in BACE1 transport and sorting as well as regulation of BACE1 protein levels. Regulates retrograde transport of BACE1 from endosomes to the trans-Golgi network via interaction through the VHS motif and dependent of BACE1 phosphorylation. Modulates BACE1 protein levels independently of the interaction between VHS domain and DXXLL motif through recognition of ubiquitination. Key player in a novel DXXLL-mediated endosomal sorting machinery to the recycling pathway that targets NTRK1 to the plasma membrane. The sequence is that of ADP-ribosylation factor-binding protein GGA3 from Homo sapiens (Human).